We begin with the raw amino-acid sequence, 394 residues long: Elongation factor Tu (394 aa).

The tr-type G domain maps to 10 to 205 (KPHVNIGTIG…VDNWIPLPPR (196 aa)). The segment at 19–26 (GHVDHGKT) is G1. 19-26 (GHVDHGKT) contacts GTP. Thr26 serves as a coordination point for Mg(2+). Positions 60-64 (GITIN) are G2. A G3 region spans residues 81-84 (DCPG). GTP-binding positions include 81–85 (DCPGH) and 136–139 (NKCD). Positions 136-139 (NKCD) are G4. The interval 174-176 (SAL) is G5.

The protein belongs to the TRAFAC class translation factor GTPase superfamily. Classic translation factor GTPase family. EF-Tu/EF-1A subfamily. Monomer.

The protein localises to the cytoplasm. It carries out the reaction GTP + H2O = GDP + phosphate + H(+). GTP hydrolase that promotes the GTP-dependent binding of aminoacyl-tRNA to the A-site of ribosomes during protein biosynthesis. This is Elongation factor Tu from Bacteroides thetaiotaomicron (strain ATCC 29148 / DSM 2079 / JCM 5827 / CCUG 10774 / NCTC 10582 / VPI-5482 / E50).